A 72-amino-acid polypeptide reads, in one-letter code: Large ribosomal subunit protein uL29 (72 aa).

This sequence belongs to the universal ribosomal protein uL29 family.

The chain is Large ribosomal subunit protein uL29 from Prochlorococcus marinus (strain MIT 9515).